Reading from the N-terminus, the 454-residue chain is MKVIQEKLPASQVGLEIEVPADVTQKAYDDTVRKLARTVNLPGFRKGKVPKQILIQRLGPNRIKASVLEDLIDDSLKAAIAQENIEALGNFQLKSSFDDLISAYKPGEASSFKAAVDVPATVTLNSYKGLSFKAEKSEYDPADLDEFLTQKQRELATLVPVEDRAAQMGDVAIADYEGRYVNDAGEEEEDIIPGTQAEDFSLDLEEGKFIPGFVDGFVGMKPEETKKFTVTFPEDYGNEEMAGKQVSFTVTLKELKSRELPELDDEFASEATNEEFETLAAWQESLEAQLKENAEISTKNSVRRYLLEQLAANNSTELPEVSVNEEITAVLTQQMMEFSRMGIDVNRIFTKDMIPKLRETARPEAEQRLSNSLILTEIAKVEKIEIDTDKFNERLEEAKAELQEGFDEERLQEAIKEELTIDATLDWLEEQSEIEFVPAGTLEAEEAEAANGEE.

One can recognise a PPIase FKBP-type domain in the interval 169–261 (GDVAIADYEG…LKELKSRELP (93 aa)).

The protein belongs to the FKBP-type PPIase family. Tig subfamily.

Its subcellular location is the cytoplasm. The catalysed reaction is [protein]-peptidylproline (omega=180) = [protein]-peptidylproline (omega=0). Its function is as follows. Involved in protein export. Acts as a chaperone by maintaining the newly synthesized protein in an open conformation. Functions as a peptidyl-prolyl cis-trans isomerase. The chain is Trigger factor from Picosynechococcus sp. (strain ATCC 27264 / PCC 7002 / PR-6) (Agmenellum quadruplicatum).